Here is a 391-residue protein sequence, read N- to C-terminus: Multidrug resistance protein MdtL (391 aa).

Transmembrane regions (helical) follow at residues 4–24 (FLICSFALVLLYPAGIDMYLV), 42–62 (IAFSVYLAGMAAAMLFAGKVA), 69–89 (PVAIPGAALFIIASVFCSLAE), 93–113 (LFLAGRFLQGLGAGCCYVVAF), 131–151 (LLNGITCIIPVLAPVLGHLIM), 158–178 (SLFWTMATMGIAVLMLSLFIL), 203–222 (FFLSRVVITTLSVSVILTFV), 245–265 (ALTAGVSMTVSFSTPFALGIF), 269–289 (TLMITSQVLFLAAGITLAVSP), 293–313 (VSLFGITLICAGFSVGFGVAM), 331–351 (LGIAQVCGSSLWIWLAAVVGI), and 356–376 (MLIGILIACSIVSLLLIMFVA).

It belongs to the major facilitator superfamily. DHA1 family. MdtL (TC 2.A.1.2.22) subfamily.

It is found in the cell inner membrane. In terms of biological role, confers resistance to chloramphenicol. The sequence is that of Multidrug resistance protein MdtL from Escherichia coli O17:K52:H18 (strain UMN026 / ExPEC).